The chain runs to 392 residues: Immunoglobulin-binding protein EibA (392 aa).

The N-terminal stretch at 1–27 (MSKKFTKAVLSAAMAGVLFGVSFDIMA) is a signal peptide. The surface exposed passenger domain stretch occupies residues 28–301 (AEQSYSALNA…IAANTRTLQQ (274 aa)). Residues 28-341 (AEQSYSALNA…GLFQPYSVGK (314 aa)) lie on the Extracellular side of the membrane. Positions 174-215 (ESANSTIVANELEAQKGKLDAQKGELEAQKKNLGELTTRTDK) form a coiled coil. The segment at 187 to 230 (AQKGKLDAQKGELEAQKKNLGELTTRTDKIDAAAAATAAKVESR) is right-handed coiled-coil (RHcc). Positions 231-256 (TLVGVSSDGTLTRAEGAKNTISVNDG) are saddle domain. Residues 257–322 (LVALSGRTDR…INENHKEMKR (66 aa)) form a left-handed coiled-coil (LHcc) region. An outer membrane translocation of the passenger domain region spans residues 299 to 341 (LQQHSARLDSQQRQINENHKEMKRAAAQSAALTGLFQPYSVGK). 4 beta stranded membrane passes run 342–352 (FNASAAVGGYS), 355–366 (QALAVGVGYRFN), 369–378 (TAAKAGVAFS), and 382–392 (ASWNVGVNFEF). The interval 342-392 (FNASAAVGGYSDEQALAVGVGYRFNEQTAAKAGVAFSDGDASWNVGVNFEF) is translocator domain.

Belongs to the autotransporter-2 (AT-2) (TC 1.B.40) family. Eib subfamily. In terms of assembly, homotrimer; can probably form mixed heterotrimers in vivo. Will form mixed heterotrimers with EibD; these are correctly located in the outer membrane and bind IgG Fc, although less well than homotrimers. Does not form trimers with distantly related YadA from Y.enterocolitica; coexpression was lethal and one of the genes is eliminated in vivo. If the full translocator domain (299-392) is exchanged with that of YadA ('368-455'), will form heterotrimers with YadA and vice-versa. In denaturing gels runs as 2 bands of about 121 and 131 kDa; extracting the sample with 88% phenol at 70 degrees Celsius reduces part of the signal to about 45 kDa. Binds the Fc portion of IgG; binds more than 1 Fc per subunit.

Its subcellular location is the cell surface. It localises to the cell outer membrane. Binds (in a non-immune fashion) to the Fc portion of human IgG but not IgA; binding occurs on the cell surface. Confers the ability to survive exposure to human serum exposure. Binds to the Fc portion of human IgG and to whole mouse antibodies also via Fc, binds more than 1 Fc or IgG. The protein is Immunoglobulin-binding protein EibA of Escherichia coli.